Reading from the N-terminus, the 407-residue chain is BTB/POZ and MATH domain-containing protein 1 (407 aa).

In terms of domain architecture, MATH spans 33–167; the sequence is NGFHEFKICG…ENSLLVRCRV (135 aa). The 68-residue stretch at 203–270 folds into the BTB domain; sequence CDVVFQVDGE…IYWDELPDMQ (68 aa).

Belongs to the Tdpoz family. Homodimer or heterodimer with BPM3, BPM5 and BPM6. Interacts with CUL3A and CUL3B. Interacts with RAP2-4 and RAP2-13. Binds to MYB56 at the promoter of FLOWERING LOCUS T (FT). Ubiquitous.

It localises to the nucleus. It participates in protein modification; protein ubiquitination. Its function is as follows. May act as a substrate-specific adapter of an E3 ubiquitin-protein ligase complex (CUL3-RBX1-BTB) which mediates the ubiquitination and subsequent proteasomal degradation of target proteins. The chain is BTB/POZ and MATH domain-containing protein 1 (BPM1) from Arabidopsis thaliana (Mouse-ear cress).